The following is a 117-amino-acid chain: Prefoldin subunit beta (117 aa).

It belongs to the prefoldin subunit beta family. In terms of assembly, heterohexamer of two alpha and four beta subunits.

It is found in the cytoplasm. In terms of biological role, molecular chaperone capable of stabilizing a range of proteins. Seems to fulfill an ATP-independent, HSP70-like function in archaeal de novo protein folding. This chain is Prefoldin subunit beta, found in Methanosarcina mazei (strain ATCC BAA-159 / DSM 3647 / Goe1 / Go1 / JCM 11833 / OCM 88) (Methanosarcina frisia).